A 149-amino-acid polypeptide reads, in one-letter code: Large ribosomal subunit protein bL9 (149 aa).

Belongs to the bacterial ribosomal protein bL9 family.

Binds to the 23S rRNA. The chain is Large ribosomal subunit protein bL9 from Mycoplasma pneumoniae (strain ATCC 29342 / M129 / Subtype 1) (Mycoplasmoides pneumoniae).